The sequence spans 445 residues: Argininosuccinate synthase (445 aa).

Residues 17–25 (AFSGGLDTS) and Ala-43 each bind ATP. Tyr-99 provides a ligand contact to L-citrulline. Positions 129 and 131 each coordinate ATP. Residues Thr-131, Asn-135, and Asp-136 each coordinate L-aspartate. Residue Asn-135 coordinates L-citrulline. Asp-136 contributes to the ATP binding site. L-citrulline contacts are provided by Arg-139 and Ser-192. Asp-194 provides a ligand contact to ATP. Thr-201, Glu-203, and Glu-280 together coordinate L-citrulline.

This sequence belongs to the argininosuccinate synthase family. Type 2 subfamily. As to quaternary structure, homotetramer.

The protein resides in the cytoplasm. It carries out the reaction L-citrulline + L-aspartate + ATP = 2-(N(omega)-L-arginino)succinate + AMP + diphosphate + H(+). It participates in amino-acid biosynthesis; L-arginine biosynthesis; L-arginine from L-ornithine and carbamoyl phosphate: step 2/3. The sequence is that of Argininosuccinate synthase from Rhodopseudomonas palustris (strain BisA53).